A 310-amino-acid polypeptide reads, in one-letter code: Leucine carboxyl methyltransferase 1 (310 aa).

S-adenosyl-L-methionine is bound by residues Arg-50, Gly-75, Asp-100, 145-146 (DI), and Glu-169.

The protein belongs to the methyltransferase superfamily. LCMT family.

The enzyme catalyses [phosphatase 2A protein]-C-terminal L-leucine + S-adenosyl-L-methionine = [phosphatase 2A protein]-C-terminal L-leucine methyl ester + S-adenosyl-L-homocysteine. In terms of biological role, methylates the carboxyl group of the C-terminal leucine residue of protein phosphatase 2A catalytic subunits to form alpha-leucine ester residues. This is Leucine carboxyl methyltransferase 1 (ppm1) from Schizosaccharomyces pombe (strain 972 / ATCC 24843) (Fission yeast).